The chain runs to 316 residues: Ribosomal RNA small subunit methyltransferase H (316 aa).

Residues Gly-35–His-37, Asp-55, Phe-79, Asp-101, and Gln-108 each bind S-adenosyl-L-methionine.

The protein belongs to the methyltransferase superfamily. RsmH family.

The protein resides in the cytoplasm. It carries out the reaction cytidine(1402) in 16S rRNA + S-adenosyl-L-methionine = N(4)-methylcytidine(1402) in 16S rRNA + S-adenosyl-L-homocysteine + H(+). Its function is as follows. Specifically methylates the N4 position of cytidine in position 1402 (C1402) of 16S rRNA. In Aliivibrio salmonicida (strain LFI1238) (Vibrio salmonicida (strain LFI1238)), this protein is Ribosomal RNA small subunit methyltransferase H.